The following is a 319-amino-acid chain: BTB/POZ domain-containing adapter for CUL3-mediated RhoA degradation protein 2 (319 aa).

The 69-residue stretch at 31-99 (KYIRLNVGGC…LRDDTIALPK (69 aa)) folds into the BTB domain.

This sequence belongs to the BACURD family. Component of the BCR(TNFAIP1) E3 ubiquitin ligase complex, at least composed of cul3, tnfaip1/bacurd2 and rbx1.

Its subcellular location is the cytoplasm. It localises to the nucleus. The protein localises to the endosome. It functions in the pathway protein modification; protein ubiquitination. Functionally, substrate-specific adapter of a BCR (BTB-CUL3-RBX1) E3 ubiquitin-protein ligase complex involved in regulation of cytoskeleton structure. The BCR(TNFAIP1) E3 ubiquitin ligase complex mediates the ubiquitination of target proteins, leading to their degradation by the proteasome. This chain is BTB/POZ domain-containing adapter for CUL3-mediated RhoA degradation protein 2 (tnfaip1), found in Xenopus laevis (African clawed frog).